The sequence spans 307 residues: Ribosomal RNA large subunit methyltransferase F (307 aa).

It belongs to the methyltransferase superfamily. METTL16/RlmF family.

Its subcellular location is the cytoplasm. It catalyses the reaction adenosine(1618) in 23S rRNA + S-adenosyl-L-methionine = N(6)-methyladenosine(1618) in 23S rRNA + S-adenosyl-L-homocysteine + H(+). Its function is as follows. Specifically methylates the adenine in position 1618 of 23S rRNA. This chain is Ribosomal RNA large subunit methyltransferase F, found in Bacteroides thetaiotaomicron (strain ATCC 29148 / DSM 2079 / JCM 5827 / CCUG 10774 / NCTC 10582 / VPI-5482 / E50).